The following is a 21-amino-acid chain: Sarafotoxin-D (21 aa).

2 cysteine pairs are disulfide-bonded: C1-C15 and C3-C11.

The protein belongs to the endothelin/sarafotoxin family. Expressed by the venom gland.

It localises to the secreted. Vasoconstrictor activity. These toxins cause cardiac arrest probably as a result of coronary vasospasm. May act by displaying agonistic activities towards endothelin-1 and -2 receptors (EDNRA and EDNRB). The sequence is that of Sarafotoxin-D from Atractaspis engaddensis (Israeli burrowing asp).